A 128-amino-acid chain; its full sequence is MREGDSGYFSCYDGNRFRLVILASQRAHELSSGACTAVARKGDKNTVVALREIVGEQLDLAAVFRLAVNRCRKYLEEFTNAREVAAARSSQAAPKSAPGQEIGKSFREKDPSAAAFLDQEQFFSGGGE.

A disordered region spans residues 87-106; the sequence is ARSSQAAPKSAPGQEIGKSF.

This sequence belongs to the RNA polymerase subunit omega family. As to quaternary structure, the RNAP catalytic core consists of 2 alpha, 1 beta, 1 beta' and 1 omega subunit. When a sigma factor is associated with the core the holoenzyme is formed, which can initiate transcription.

The enzyme catalyses RNA(n) + a ribonucleoside 5'-triphosphate = RNA(n+1) + diphosphate. In terms of biological role, promotes RNA polymerase assembly. Latches the N- and C-terminal regions of the beta' subunit thereby facilitating its interaction with the beta and alpha subunits. The polypeptide is DNA-directed RNA polymerase subunit omega (Anaplasma marginale (strain St. Maries)).